Here is a 171-residue protein sequence, read N- to C-terminus: Ribosome maturation factor RimM (171 aa).

In terms of domain architecture, PRC barrel spans 98–170 (EGEFYLHQII…AVQVSVPEGL (73 aa)).

The protein belongs to the RimM family. Binds ribosomal protein uS19.

It is found in the cytoplasm. In terms of biological role, an accessory protein needed during the final step in the assembly of 30S ribosomal subunit, possibly for assembly of the head region. Essential for efficient processing of 16S rRNA. May be needed both before and after RbfA during the maturation of 16S rRNA. It has affinity for free ribosomal 30S subunits but not for 70S ribosomes. The sequence is that of Ribosome maturation factor RimM from Pediococcus pentosaceus (strain ATCC 25745 / CCUG 21536 / LMG 10740 / 183-1w).